Consider the following 464-residue polypeptide: MVRVRFAPSPTGHLHVGGARTALFNWMFARKEGGKFILRIEDTDTERSSREYEQQILESLRWCGLDWDEGPDIGGDFGPYRQSERLEIYREYAKKLVEDKRAYYVVYDKEDPSKELFTTYDYPHEYKEKGHPVTIKFKVLPGKTSFEDLLKGYMEFDNSTLEDFIIMKSNGFPTYNFAVVVDDHLMRISHVFRGEDHLSNTPKQLMIYEAFGWEAPVFMHIPLILGPDRTPLSKRHGATSVEHFRREGILSRALMNYLALLGWRVEGDEIFTIEEKLQSFDPKDISNKGVIFDYQKLEWVNGKHMRRIDLEDLKREFIEWAKYVGREIPSLNESYFTEALRICREKVNTLSQLYDIMYPFMSDDYEYEKDYVEKFLKREEAERVLEEAKKAFKDLNSWNMEEIEKTLRDLSEKGLASKKVVFQLIRGAVTGKLVTPGLFETIEVLGKERTLKRLERTLQFLKKT.

Positions 8–18 (PSPTGHLHVGG) match the 'HIGH' region motif. The short motif at 231 to 235 (PLSKR) is the 'KMSKS' region element. Lys234 provides a ligand contact to ATP.

It belongs to the class-I aminoacyl-tRNA synthetase family. Glutamate--tRNA ligase type 1 subfamily. As to quaternary structure, monomer.

It is found in the cytoplasm. It carries out the reaction tRNA(Glu) + L-glutamate + ATP = L-glutamyl-tRNA(Glu) + AMP + diphosphate. Its function is as follows. Catalyzes the attachment of glutamate to tRNA(Glu) in a two-step reaction: glutamate is first activated by ATP to form Glu-AMP and then transferred to the acceptor end of tRNA(Glu). This chain is Glutamate--tRNA ligase 1, found in Thermotoga sp. (strain RQ2).